The primary structure comprises 398 residues: Ribosomal RNA large subunit methyltransferase F (398 aa).

Residues 1-12 (MTPSRKPARPGA) are compositionally biased toward basic residues. Residues 1–85 (MTPSRKPARP…RNLHGQGYDF (85 aa)) are disordered. 2 stretches are compositionally biased toward low complexity: residues 20 to 40 (PSAK…AQPK) and 48 to 59 (QAKSQAKPQAKS).

The protein belongs to the methyltransferase superfamily. METTL16/RlmF family.

Its subcellular location is the cytoplasm. It catalyses the reaction adenosine(1618) in 23S rRNA + S-adenosyl-L-methionine = N(6)-methyladenosine(1618) in 23S rRNA + S-adenosyl-L-homocysteine + H(+). Specifically methylates the adenine in position 1618 of 23S rRNA. The sequence is that of Ribosomal RNA large subunit methyltransferase F from Shewanella loihica (strain ATCC BAA-1088 / PV-4).